Reading from the N-terminus, the 498-residue chain is Glycerol kinase (498 aa).

Threonine 12 serves as a coordination point for ADP. ATP is bound by residues threonine 12, threonine 13, and serine 14. Residue threonine 12 participates in sn-glycerol 3-phosphate binding. Arginine 16 contacts ADP. Sn-glycerol 3-phosphate is bound by residues arginine 82, glutamate 83, tyrosine 134, and aspartate 243. 5 residues coordinate glycerol: arginine 82, glutamate 83, tyrosine 134, aspartate 243, and glutamine 244. The ADP site is built by threonine 265 and glycine 308. Threonine 265, glycine 308, glutamine 312, and glycine 409 together coordinate ATP. The ADP site is built by glycine 409 and asparagine 413.

Belongs to the FGGY kinase family. In terms of assembly, homotetramer and homodimer (in equilibrium).

It carries out the reaction glycerol + ATP = sn-glycerol 3-phosphate + ADP + H(+). The protein operates within polyol metabolism; glycerol degradation via glycerol kinase pathway; sn-glycerol 3-phosphate from glycerol: step 1/1. Activated by phosphorylation and inhibited by fructose 1,6-bisphosphate (FBP). Its function is as follows. Key enzyme in the regulation of glycerol uptake and metabolism. Catalyzes the phosphorylation of glycerol to yield sn-glycerol 3-phosphate. The sequence is that of Glycerol kinase from Clostridium botulinum (strain Okra / Type B1).